The sequence spans 1138 residues: Envelopment polyprotein (1138 aa).

Positions 1–18 (MEGWYLVVLGVCYTLTLA) are cleaved as a signal peptide. Over 19 to 487 (MPKTIYELKM…CVPGLHGWAT (469 aa)) the chain is Lumenal. Cystine bridges form between Cys30–Cys155, Cys64–Cys161, Cys113–Cys132, Cys137–Cys142, Cys179–Cys189, Cys214–Cys250, Cys239–Cys354, Cys379–Cys438, Cys383–Cys392, Cys408–Cys427, and Cys455–Cys478. The N-linked (GlcNAc...) asparagine; by host glycan is linked to Asn138. N-linked (GlcNAc...) asparagine; by host glycosylation is present at Asn350. An N-linked (GlcNAc...) asparagine; by host glycan is attached at Asn402. Residues 488 to 508 (VMLLSTFCFGWVLIPAVTLII) traverse the membrane as a helical segment. Topologically, residues 509–630 (LKCLRVLTFS…LGVFRYKSRC (122 aa)) are cytoplasmic. The interval 519 to 536 (CSHYTNESKFKFILEKVK) is binding to the ribonucleoprotein. CCHC-type zinc fingers lie at residues 548 to 568 (CDVC…RQSC) and 573 to 594 (CPYC…YSIC). 3 binding to the ribonucleoprotein regions span residues 591–608 (YSIC…KKSL), 595–606 (KLTGRFQEALKK), and 614–628 (KKGC…RYKS). The segment at 610–637 (KPEVKKGCYRTLGVFRYKSRCYVGLVWC) is interaction with host TRAF3. Positions 614–637 (KKGCYRTLGVFRYKSRCYVGLVWC) constitute an ITAM domain. Phosphotyrosine occurs at positions 618 and 631. The YxxL motif lies at 618–621 (YRTL). A helical membrane pass occupies residues 631 to 651 (YVGLVWCLLLTCEIVIWAASA). Over 652–1107 (ETPLMESGWS…EWLLGILNGN (456 aa)) the chain is Lumenal. 8 cysteine pairs are disulfide-bonded: Cys738–Cys773, Cys742–Cys780, Cys754–Cys887, Cys768–Cys898, Cys783–Cys906, Cys809–Cys818, Cys826–Cys835, and Cys866–Cys870. The tract at residues 760 to 780 (YQYETGWGCNPGDCPGVGTGC) is fusion loop. The N-linked (GlcNAc...) asparagine; by host glycan is linked to Asn930. 5 disulfide bridges follow: Cys972/Cys1002, Cys995/Cys1047, Cys1012/Cys1017, Cys1048/Cys1053, and Cys1087/Cys1091. The helical transmembrane segment at 1108-1128 (WIVVVVLVVILILSIIMFSVL) threads the bilayer. A binding to the ribonucleoprotein region spans residues 1124–1138 (MFSVLCPRRGHKKTV). Topologically, residues 1129 to 1138 (CPRRGHKKTV) are cytoplasmic.

It belongs to the hantavirus envelope glycoprotein family. In terms of assembly, homodimer. Homotetramer; forms heterotetrameric Gn-Gc spikes in the pre-fusion conformation. Interacts (via C-terminus) with the nucleoprotein. Interacts with host TUFM; this interaction contributes to the virus-induced degradation of mitochondria by autophagy, which leads to degradation of host MAVS and inhibition of type I interferon (IFN) responses. Interacts with host MAP1LC3B; this interaction contributes to the virus-induced degradation of mitochondria by autophagy, which leads to degradation of host MAVS and inhibition of type I interferon (IFN) responses. Interacts (via C-terminus) with host TRAF3; this interaction inhibits the formation of TRAF3-TBK1 complexes. Homodimer. Homotetramer; forms heterotetrameric Gn-Gc spikes in the pre-fusion conformation. Homotrimer; forms homotrimer in the post-fusion conformation at acidic pH. Interacts (via C-terminus) with the nucleoprotein. In terms of processing, envelope polyprotein precursor is quickly cleaved in vivo just after synthesis, presumably by host signal peptidase.

The protein localises to the virion membrane. It is found in the host cell surface. The protein resides in the host Golgi apparatus membrane. It localises to the host endoplasmic reticulum membrane. Its subcellular location is the host mitochondrion. Functionally, forms homotetramers with glycoprotein C at the surface of the virion. Attaches the virion to host cell receptors including integrin ITGAV/ITGB3. This attachment induces virion internalization possibly through clathrin-dependent endocytosis and dynamin-independent macropinocytosis. Mediates the assembly and budding of infectious virus particles through its interaction with the nucleocapsid protein and the viral genome. May dysregulate normal immune and endothelial cell responses through an ITAM motif. Translocates to mitochondria, binds to host TUFM and recruits MAP1LC3B. These interactions induce mitochondrial autophagy and therefore destruction of host MAVS leading to inhibition of type I interferon (IFN) responses. Concomitant breakdown of glycoprotein N is apparently prevented by the nucleoprotein that may inhibit Gn-stimulated autophagosome-lysosome fusion. Interacts with the viral genomic RNA. Inhibits the host RIG-I/TBK1 pathway by disrupting the formation of TBK1-TRAF3 complexes and downstream signaling responses required for IFN-beta transcription. Its function is as follows. Forms homotetramers with glycoprotein N at the surface of the virion. Attaches the virion to host cell receptors including integrin ITGAV/ITGB3. This attachment induces virion internalization predominantly through clathrin-dependent endocytosis. Class II fusion protein that promotes fusion of viral membrane with host endosomal membrane after endocytosis of the virion. The chain is Envelopment polyprotein (GP) from Abrothrix longipilis (Long-haired grass mouse).